The primary structure comprises 122 residues: Large ribosomal subunit protein uL14 (122 aa).

The protein belongs to the universal ribosomal protein uL14 family. Part of the 50S ribosomal subunit. Forms a cluster with proteins L3 and L19. In the 70S ribosome, L14 and L19 interact and together make contacts with the 16S rRNA in bridges B5 and B8.

Its function is as follows. Binds to 23S rRNA. Forms part of two intersubunit bridges in the 70S ribosome. The sequence is that of Large ribosomal subunit protein uL14 from Lachnospira eligens (strain ATCC 27750 / DSM 3376 / VPI C15-48 / C15-B4) (Eubacterium eligens).